Consider the following 237-residue polypeptide: Leucyl/phenylalanyl-tRNA--protein transferase (237 aa).

Belongs to the L/F-transferase family.

The protein localises to the cytoplasm. It catalyses the reaction N-terminal L-lysyl-[protein] + L-leucyl-tRNA(Leu) = N-terminal L-leucyl-L-lysyl-[protein] + tRNA(Leu) + H(+). The enzyme catalyses N-terminal L-arginyl-[protein] + L-leucyl-tRNA(Leu) = N-terminal L-leucyl-L-arginyl-[protein] + tRNA(Leu) + H(+). The catalysed reaction is L-phenylalanyl-tRNA(Phe) + an N-terminal L-alpha-aminoacyl-[protein] = an N-terminal L-phenylalanyl-L-alpha-aminoacyl-[protein] + tRNA(Phe). Functions in the N-end rule pathway of protein degradation where it conjugates Leu, Phe and, less efficiently, Met from aminoacyl-tRNAs to the N-termini of proteins containing an N-terminal arginine or lysine. In Photobacterium profundum (strain SS9), this protein is Leucyl/phenylalanyl-tRNA--protein transferase.